The following is a 488-amino-acid chain: Sterol 14-demethylase (488 aa).

The helical transmembrane segment at 12 to 32 threads the bilayer; the sequence is TGLVIVATLVIAKLIFSFFTS. Cys433 contributes to the heme binding site.

Belongs to the cytochrome P450 family. Heme is required as a cofactor. In terms of tissue distribution, expressed in leaves, roots, stems, siliques, flowers, flower buds and seedlings.

Its subcellular location is the membrane. The enzyme catalyses a 14alpha-methyl steroid + 3 reduced [NADPH--hemoprotein reductase] + 3 O2 = a Delta(14) steroid + formate + 3 oxidized [NADPH--hemoprotein reductase] + 4 H2O + 4 H(+). Functionally, involved in sterol biosynthesis. Catalyzes the 14-alpha demethylation of obtusifoliol to 4 alpha-methyl-5 alpha-ergosta-8,14,24(28)-trien-3 beta-ol. This is Sterol 14-demethylase (CYP51G1) from Arabidopsis thaliana (Mouse-ear cress).